A 193-amino-acid chain; its full sequence is Ion-translocating oxidoreductase complex subunit A (193 aa).

6 consecutive transmembrane segments (helical) span residues 5 to 25 (LMLFIGTVLVNNFVLVKFLGL), 39 to 59 (LGMGMATTFVMTLASICAWLI), 62 to 82 (FILLPLNIPYLRTLAFIFIIA), 102 to 122 (LLGIFLPLITTNCAVLGVALL), 134 to 154 (ALYGFSAAVGFSLVMVLFAAI), and 171 to 191 (SIALITAGLMSLAFMGFTGLV).

This sequence belongs to the NqrDE/RnfAE family. As to quaternary structure, the complex is composed of six subunits: RnfA, RnfB, RnfC, RnfD, RnfE and RnfG.

It is found in the cell inner membrane. Its function is as follows. Part of a membrane-bound complex that couples electron transfer with translocation of ions across the membrane. This Sodalis glossinidius (strain morsitans) protein is Ion-translocating oxidoreductase complex subunit A.